The chain runs to 302 residues: Homoserine O-acetyltransferase 1 (302 aa).

C142 (acyl-thioester intermediate) is an active-site residue. 2 residues coordinate substrate: K163 and S192. H235 acts as the Proton acceptor in catalysis. E237 is an active-site residue. Position 249 (R249) interacts with substrate.

Belongs to the MetA family.

It localises to the cytoplasm. It carries out the reaction L-homoserine + acetyl-CoA = O-acetyl-L-homoserine + CoA. It participates in amino-acid biosynthesis; L-methionine biosynthesis via de novo pathway; O-acetyl-L-homoserine from L-homoserine: step 1/1. Its function is as follows. Transfers an acetyl group from acetyl-CoA to L-homoserine, forming acetyl-L-homoserine. This chain is Homoserine O-acetyltransferase 1, found in Ilyobacter polytropus (strain ATCC 51220 / DSM 2926 / LMG 16218 / CuHBu1).